Reading from the N-terminus, the 283-residue chain is Pantothenate synthetase (283 aa).

30-37 (MGNLHDGH) contacts ATP. His-37 (proton donor) is an active-site residue. Gln-61 is a (R)-pantoate binding site. Gln-61 contributes to the beta-alanine binding site. 149–152 (GEKD) is a binding site for ATP. Gln-155 is a binding site for (R)-pantoate. 186–189 (LSSR) serves as a coordination point for ATP.

This sequence belongs to the pantothenate synthetase family. In terms of assembly, homodimer.

Its subcellular location is the cytoplasm. It carries out the reaction (R)-pantoate + beta-alanine + ATP = (R)-pantothenate + AMP + diphosphate + H(+). It functions in the pathway cofactor biosynthesis; (R)-pantothenate biosynthesis; (R)-pantothenate from (R)-pantoate and beta-alanine: step 1/1. Its function is as follows. Catalyzes the condensation of pantoate with beta-alanine in an ATP-dependent reaction via a pantoyl-adenylate intermediate. The sequence is that of Pantothenate synthetase from Escherichia coli (strain SMS-3-5 / SECEC).